A 715-amino-acid polypeptide reads, in one-letter code: Fatty acid oxidation complex subunit alpha (715 aa).

Residues 1 to 190 (MIYEGKAITV…KVSAVDAVVT (190 aa)) are enoyl-CoA hydratase/isomerase. Asp-297 is a binding site for substrate. The interval 312–715 (KDVKQAAVLG…MAKNGQSFFG (404 aa)) is 3-hydroxyacyl-CoA dehydrogenase. Residues Met-325, Asp-344, 401-403 (VVE), Lys-408, and Ser-430 contribute to the NAD(+) site. The For 3-hydroxyacyl-CoA dehydrogenase activity role is filled by His-451. Asn-454 provides a ligand contact to NAD(+). Substrate is bound by residues Asn-501 and Tyr-660.

It in the N-terminal section; belongs to the enoyl-CoA hydratase/isomerase family. The protein in the C-terminal section; belongs to the 3-hydroxyacyl-CoA dehydrogenase family. Heterotetramer of two alpha chains (FadB) and two beta chains (FadA).

The enzyme catalyses a (3S)-3-hydroxyacyl-CoA + NAD(+) = a 3-oxoacyl-CoA + NADH + H(+). It catalyses the reaction a (3S)-3-hydroxyacyl-CoA = a (2E)-enoyl-CoA + H2O. The catalysed reaction is a 4-saturated-(3S)-3-hydroxyacyl-CoA = a (3E)-enoyl-CoA + H2O. It carries out the reaction (3S)-3-hydroxybutanoyl-CoA = (3R)-3-hydroxybutanoyl-CoA. The enzyme catalyses a (3Z)-enoyl-CoA = a 4-saturated (2E)-enoyl-CoA. It catalyses the reaction a (3E)-enoyl-CoA = a 4-saturated (2E)-enoyl-CoA. It participates in lipid metabolism; fatty acid beta-oxidation. Functionally, involved in the aerobic and anaerobic degradation of long-chain fatty acids via beta-oxidation cycle. Catalyzes the formation of 3-oxoacyl-CoA from enoyl-CoA via L-3-hydroxyacyl-CoA. It can also use D-3-hydroxyacyl-CoA and cis-3-enoyl-CoA as substrate. This Pseudomonas fragi protein is Fatty acid oxidation complex subunit alpha.